The primary structure comprises 414 residues: Ornithine aminotransferase (414 aa).

The cysteines at positions 154 and 163 are disulfide-linked. Lys-262 is subject to N6-(pyridoxal phosphate)lysine.

This sequence belongs to the class-III pyridoxal-phosphate-dependent aminotransferase family. Homodimer. Pyridoxal 5'-phosphate is required as a cofactor. In terms of processing, the disulfide bond between Cys-154 and Cys-163 is reduced by TRX1 which increases OAT catalytic activity.

Its subcellular location is the cytoplasm. It catalyses the reaction a 2-oxocarboxylate + L-ornithine = L-glutamate 5-semialdehyde + an L-alpha-amino acid. The catalysed reaction is L-ornithine + 2-oxoglutarate = L-glutamate 5-semialdehyde + L-glutamate. It participates in amino-acid biosynthesis; L-proline biosynthesis; L-glutamate 5-semialdehyde from L-ornithine: step 1/1. Unlike for mammalian OATs, activity is increased by TRX1-mediated reduction of the disulfide bond between Cys-154 and Cys-163. Binding to TRX1 may also induce conformational changes that facilitate substrate binding. Functionally, the enzyme has a very narrow substrate specificity and can only catalyze the transamination of alpha-ketoglutarate with ornithine or N-acetylornithine and, to a lesser extent, of glutamate-5-semialdehyde with glutamate and alanine. This Plasmodium falciparum (isolate 3D7) protein is Ornithine aminotransferase.